We begin with the raw amino-acid sequence, 473 residues long: Bifunctional protein HldE (473 aa).

The segment at 1 to 318 is ribokinase; sequence MKLTLPRYDQ…RAVQREEGSE (318 aa). 194–197 is an ATP binding site; it reads NLHE. Asp263 is an active-site residue. The cytidylyltransferase stretch occupies residues 343–473; that stretch reads FTNGCFDILH…TAIVEKIRNK (131 aa).

It in the N-terminal section; belongs to the carbohydrate kinase PfkB family. The protein in the C-terminal section; belongs to the cytidylyltransferase family. As to quaternary structure, homodimer.

It carries out the reaction D-glycero-beta-D-manno-heptose 7-phosphate + ATP = D-glycero-beta-D-manno-heptose 1,7-bisphosphate + ADP + H(+). The enzyme catalyses D-glycero-beta-D-manno-heptose 1-phosphate + ATP + H(+) = ADP-D-glycero-beta-D-manno-heptose + diphosphate. It participates in nucleotide-sugar biosynthesis; ADP-L-glycero-beta-D-manno-heptose biosynthesis; ADP-L-glycero-beta-D-manno-heptose from D-glycero-beta-D-manno-heptose 7-phosphate: step 1/4. The protein operates within nucleotide-sugar biosynthesis; ADP-L-glycero-beta-D-manno-heptose biosynthesis; ADP-L-glycero-beta-D-manno-heptose from D-glycero-beta-D-manno-heptose 7-phosphate: step 3/4. Catalyzes the phosphorylation of D-glycero-D-manno-heptose 7-phosphate at the C-1 position to selectively form D-glycero-beta-D-manno-heptose-1,7-bisphosphate. In terms of biological role, catalyzes the ADP transfer from ATP to D-glycero-beta-D-manno-heptose 1-phosphate, yielding ADP-D-glycero-beta-D-manno-heptose. The polypeptide is Bifunctional protein HldE (Ectopseudomonas mendocina (strain ymp) (Pseudomonas mendocina)).